The chain runs to 334 residues: MNLSLVLAAFCLGIASAVPKFDQNLDTKWYQWKATHRRLYGANEEGWRRAVWEKNMKMIELHNGEYSQGKHGFTMAMNAFGDMTNEEFRQMMGCFRNQKFRKGKVFREPLFLDLPKSVDWRKKGYVTPVKNQKQCGSCWAFSATGALEGQMFRKTGKLVSLSEQNLVDCSRPQGNQGCNGGFMARAFQYVKENGGLDSEESYPYVAVDEICKYRPENSVANDTGFTVVAPGKEKALMKAVATVGPISVAMDAGHSSFQFYKSGIYFEPDCSSKNLDHGVLVVGYGFEGANSNNSKYWLVKNSWGPEWGSNGYVKIAKDKNNHCGIATAASYPNV.

The N-terminal stretch at 1-17 (MNLSLVLAAFCLGIASA) is a signal peptide. A propeptide spans 18–113 (VPKFDQNLDT…KVFREPLFLD (96 aa)) (activation peptide). 2 cysteine pairs are disulfide-bonded: cysteine 135-cysteine 178 and cysteine 169-cysteine 211. Cysteine 138 is a catalytic residue. Asparagine 221 carries N-linked (GlcNAc...) asparagine glycosylation. An intrachain disulfide couples cysteine 270 to cysteine 323. Histidine 277 is an active-site residue. Residue asparagine 292 is glycosylated (N-linked (GlcNAc...) asparagine). Asparagine 301 is an active-site residue.

The protein belongs to the peptidase C1 family. As to expression, predominantly expressed in the thymus and testis. Also expressed in corneal epithelium, and to a lesser extent in conjunctival epithelium and skin.

It localises to the lysosome. It carries out the reaction The recombinant enzyme hydrolyzes proteins (serum albumin, collagen) and synthetic substrates (Z-Phe-Arg-NHMec &gt; Z-Leu-Arg-NHMec &gt; Z-Val-Arg-NHMec).. Inhibited by CST6. Its function is as follows. Cysteine protease. May have an important role in corneal physiology. The sequence is that of Cathepsin L2 (CTSV) from Homo sapiens (Human).